The following is a 2311-amino-acid chain: Protein Ycf2 (2311 aa).

An ATP-binding site is contributed by 1652–1659; that stretch reads GSIGTGRS.

Belongs to the Ycf2 family.

It is found in the plastid. The protein resides in the chloroplast stroma. Probable ATPase of unknown function. Its presence in a non-photosynthetic plant (Epifagus virginiana) and experiments in tobacco indicate that it has an essential function which is probably not related to photosynthesis. This chain is Protein Ycf2, found in Lemna minor (Common duckweed).